We begin with the raw amino-acid sequence, 133 residues long: uncharacterized protein (133 aa).

Positions Met-1–Thr-23 are cleaved as a signal peptide. The tract at residues Glu-82–Lys-133 is disordered. The segment covering Gln-96–Pro-118 has biased composition (low complexity).

The protein localises to the secreted. This is an uncharacterized protein from Dictyostelium discoideum (Social amoeba).